A 701-amino-acid polypeptide reads, in one-letter code: Potassium-transporting ATPase ATP-binding subunit (701 aa).

A disordered region spans residues 1 to 28 (MNPDAPTPKNKSSRSRPSDRPQARKKAK). 4 helical membrane passes run 57–77 (MFLV…PNLF), 90–110 (GILT…EAVA), 245–265 (VLLA…PVFA), and 276–296 (ILVA…LSAI). Asp329 serves as the catalytic 4-aspartylphosphate intermediate. Residues Asp366, Glu370, 397 to 404 (FSAKTRMS), and Lys416 contribute to the ATP site. Residues Asp539 and Asp543 each contribute to the Mg(2+) site. 3 helical membrane-spanning segments follow: residues 599–619 (FSLA…FASA), 635–655 (AVLS…PLAL), and 681–701 (VIAP…VGLA).

It belongs to the cation transport ATPase (P-type) (TC 3.A.3) family. Type IA subfamily. In terms of assembly, the system is composed of three essential subunits: KdpA, KdpB and KdpC.

Its subcellular location is the cell membrane. The catalysed reaction is K(+)(out) + ATP + H2O = K(+)(in) + ADP + phosphate + H(+). Functionally, part of the high-affinity ATP-driven potassium transport (or Kdp) system, which catalyzes the hydrolysis of ATP coupled with the electrogenic transport of potassium into the cytoplasm. This subunit is responsible for energy coupling to the transport system and for the release of the potassium ions to the cytoplasm. The sequence is that of Potassium-transporting ATPase ATP-binding subunit from Anabaena sp. (strain L31).